We begin with the raw amino-acid sequence, 104 residues long: UPF0235 protein Paes_1868 (104 aa).

Belongs to the UPF0235 family.

The chain is UPF0235 protein Paes_1868 from Prosthecochloris aestuarii (strain DSM 271 / SK 413).